The following is a 1499-amino-acid chain: DNA-directed RNA polymerase subunit beta' (1499 aa).

Positions 67, 69, 82, and 85 each coordinate Zn(2+). Asp-499, Asp-501, and Asp-503 together coordinate Mg(2+). Residues Cys-867, Cys-943, Cys-950, and Cys-953 each contribute to the Zn(2+) site.

This sequence belongs to the RNA polymerase beta' chain family. The RNAP catalytic core consists of 2 alpha, 1 beta, 1 beta' and 1 omega subunit. When a sigma factor is associated with the core the holoenzyme is formed, which can initiate transcription. Mg(2+) is required as a cofactor. Requires Zn(2+) as cofactor.

The enzyme catalyses RNA(n) + a ribonucleoside 5'-triphosphate = RNA(n+1) + diphosphate. In terms of biological role, DNA-dependent RNA polymerase catalyzes the transcription of DNA into RNA using the four ribonucleoside triphosphates as substrates. This is DNA-directed RNA polymerase subunit beta' from Prosthecochloris aestuarii (strain DSM 271 / SK 413).